The sequence spans 91 residues: Small ribosomal subunit protein uS15 (91 aa).

This sequence belongs to the universal ribosomal protein uS15 family. As to quaternary structure, part of the 30S ribosomal subunit. Forms a bridge to the 50S subunit in the 70S ribosome, contacting the 23S rRNA.

Its function is as follows. One of the primary rRNA binding proteins, it binds directly to 16S rRNA where it helps nucleate assembly of the platform of the 30S subunit by binding and bridging several RNA helices of the 16S rRNA. Forms an intersubunit bridge (bridge B4) with the 23S rRNA of the 50S subunit in the ribosome. This chain is Small ribosomal subunit protein uS15, found in Synechococcus sp. (strain JA-2-3B'a(2-13)) (Cyanobacteria bacterium Yellowstone B-Prime).